Here is a 944-residue protein sequence, read N- to C-terminus: Valine--tRNA ligase (944 aa).

The short motif at 43–53 is the 'HIGH' region element; sequence PNVTGTLHMGH. Positions 550-554 match the 'KMSKS' region motif; the sequence is KMSKS. Lys553 is a binding site for ATP. Residues 878-942 are a coiled coil; the sequence is LVDMDAERTR…QLTGLREQRA (65 aa).

It belongs to the class-I aminoacyl-tRNA synthetase family. ValS type 1 subfamily. In terms of assembly, monomer.

Its subcellular location is the cytoplasm. The catalysed reaction is tRNA(Val) + L-valine + ATP = L-valyl-tRNA(Val) + AMP + diphosphate. Its function is as follows. Catalyzes the attachment of valine to tRNA(Val). As ValRS can inadvertently accommodate and process structurally similar amino acids such as threonine, to avoid such errors, it has a 'posttransfer' editing activity that hydrolyzes mischarged Thr-tRNA(Val) in a tRNA-dependent manner. The sequence is that of Valine--tRNA ligase from Xanthomonas axonopodis pv. citri (strain 306).